The primary structure comprises 369 residues: Phospho-N-acetylmuramoyl-pentapeptide-transferase (369 aa).

Transmembrane regions (helical) follow at residues 13–33, 49–69, 95–115, 119–139, 154–174, 183–203, 215–235, 237–257, 281–301, and 346–366; these read ISGIGLASSLAAGLGIAALTL, LPLLLCTIASAIAGYFVVPLL, MGGIFFIPVAVVGACVLSNFA, LAVSALTLSYGLIGWIDDWQI, LALQIGFAAAFCLWLMFNQPA, WVSFALPLGFLFWPLAGFVLV, IDGLAGGTVAIALLALGAIVA, TSPALMVFCAALSGSCLGFLA, AVALLTNSLVALFILSGIFFV, and VVSSFYVIAAILAAICLAIAS.

It belongs to the glycosyltransferase 4 family. MraY subfamily. The cofactor is Mg(2+).

The protein resides in the cell inner membrane. The enzyme catalyses UDP-N-acetyl-alpha-D-muramoyl-L-alanyl-gamma-D-glutamyl-meso-2,6-diaminopimeloyl-D-alanyl-D-alanine + di-trans,octa-cis-undecaprenyl phosphate = di-trans,octa-cis-undecaprenyl diphospho-N-acetyl-alpha-D-muramoyl-L-alanyl-D-glutamyl-meso-2,6-diaminopimeloyl-D-alanyl-D-alanine + UMP. It functions in the pathway cell wall biogenesis; peptidoglycan biosynthesis. Catalyzes the initial step of the lipid cycle reactions in the biosynthesis of the cell wall peptidoglycan: transfers peptidoglycan precursor phospho-MurNAc-pentapeptide from UDP-MurNAc-pentapeptide onto the lipid carrier undecaprenyl phosphate, yielding undecaprenyl-pyrophosphoryl-MurNAc-pentapeptide, known as lipid I. This Nostoc sp. (strain PCC 7120 / SAG 25.82 / UTEX 2576) protein is Phospho-N-acetylmuramoyl-pentapeptide-transferase.